Reading from the N-terminus, the 58-residue chain is uncharacterized protein (58 aa).

It to A.fulgidus AF2407.1.

This is an uncharacterized protein from Pyrococcus abyssi (strain GE5 / Orsay).